The following is a 289-amino-acid chain: MLTRIVLFAITNLAVLILASIVMSLLGVNPTQMSGLLVMALIFGFAGSFISLLMSKAIAKRTTGAYVIDQPRNLSERWLLDTVSRQAEIVGIGRPEIAIYEGVEINAFATGADRNNALVAVSTGLLQNMSQDEVEAVLGHEIAHVANGDMVTMALLQGVLNTFVIVLARVVGGFIDSLLSGNRGGARGVAYYAIVLVLELLFGLFATMITMWFSRRREFRADEGGAYLAGRNKMIAALERLGINHGQSTLPTQVQAFGIYGGIGEGLRKLFLSHPPLSERIAALRVARQ.

Transmembrane regions (helical) follow at residues 5–25 (IVLFAITNLAVLILASIVMSL) and 33–53 (MSGLLVMALIFGFAGSFISLL). Residue histidine 140 coordinates Zn(2+). Residue glutamate 141 is part of the active site. Position 144 (histidine 144) interacts with Zn(2+). 2 consecutive transmembrane segments (helical) span residues 155–175 (LLQGVLNTFVIVLARVVGGFI) and 193–213 (AIVLVLELLFGLFATMITMWF). Residue glutamate 218 coordinates Zn(2+).

The protein belongs to the peptidase M48B family. It depends on Zn(2+) as a cofactor.

Its subcellular location is the cell inner membrane. The polypeptide is Protease HtpX (htpX) (Xylella fastidiosa (strain 9a5c)).